The chain runs to 314 residues: tRNA dimethylallyltransferase 1 (314 aa).

Residue 17-24 (GPTAAGKT) coordinates ATP. Residue 19–24 (TAAGKT) coordinates substrate. The interaction with substrate tRNA stretch occupies residues 42–45 (DSRQ).

The protein belongs to the IPP transferase family. In terms of assembly, monomer. Mg(2+) serves as cofactor.

The catalysed reaction is adenosine(37) in tRNA + dimethylallyl diphosphate = N(6)-dimethylallyladenosine(37) in tRNA + diphosphate. Functionally, catalyzes the transfer of a dimethylallyl group onto the adenine at position 37 in tRNAs that read codons beginning with uridine, leading to the formation of N6-(dimethylallyl)adenosine (i(6)A). The sequence is that of tRNA dimethylallyltransferase 1 from Syntrophotalea carbinolica (strain DSM 2380 / NBRC 103641 / GraBd1) (Pelobacter carbinolicus).